The chain runs to 390 residues: Probable L-tyrosine/L-aspartate decarboxylase (390 aa).

Lys-239 carries the N6-(pyridoxal phosphate)lysine modification.

Belongs to the group II decarboxylase family. MfnA subfamily. Requires pyridoxal 5'-phosphate as cofactor.

It carries out the reaction L-tyrosine + H(+) = tyramine + CO2. It catalyses the reaction L-aspartate + H(+) = beta-alanine + CO2. The protein operates within cofactor biosynthesis; methanofuran biosynthesis. Its pathway is cofactor biosynthesis; coenzyme A biosynthesis. In terms of biological role, catalyzes the decarboxylation of L-tyrosine to produce tyramine for methanofuran biosynthesis. Can also catalyze the decarboxylation of L-aspartate to produce beta-alanine for coenzyme A (CoA) biosynthesis. The chain is Probable L-tyrosine/L-aspartate decarboxylase from Methanococcus aeolicus (strain ATCC BAA-1280 / DSM 17508 / OCM 812 / Nankai-3).